A 113-amino-acid chain; its full sequence is Flagellar hook-basal body complex protein FliE (113 aa).

It belongs to the FliE family.

It localises to the bacterial flagellum basal body. In Burkholderia mallei (strain NCTC 10247), this protein is Flagellar hook-basal body complex protein FliE.